A 275-amino-acid chain; its full sequence is Phosphonoacetaldehyde hydrolase (275 aa).

Asp-15 functions as the Nucleophile in the catalytic mechanism. Residues Asp-15 and Ala-17 each contribute to the Mg(2+) site. Lys-56 (schiff-base intermediate with substrate) is an active-site residue. Asp-189 serves as a coordination point for Mg(2+).

It belongs to the HAD-like hydrolase superfamily. PhnX family. In terms of assembly, homodimer. Requires Mg(2+) as cofactor.

The catalysed reaction is phosphonoacetaldehyde + H2O = acetaldehyde + phosphate + H(+). Involved in phosphonate degradation. The polypeptide is Phosphonoacetaldehyde hydrolase (Pseudomonas putida (strain W619)).